A 1357-amino-acid polypeptide reads, in one-letter code: DNA-directed RNA polymerase subunit beta (1357 aa).

Belongs to the RNA polymerase beta chain family. The RNAP catalytic core consists of 2 alpha, 1 beta, 1 beta' and 1 omega subunit. When a sigma factor is associated with the core the holoenzyme is formed, which can initiate transcription.

It catalyses the reaction RNA(n) + a ribonucleoside 5'-triphosphate = RNA(n+1) + diphosphate. Functionally, DNA-dependent RNA polymerase catalyzes the transcription of DNA into RNA using the four ribonucleoside triphosphates as substrates. The sequence is that of DNA-directed RNA polymerase subunit beta from Pseudomonas syringae pv. syringae (strain B728a).